A 64-amino-acid chain; its full sequence is Large ribosomal subunit protein bL35 (64 aa).

The span at 1–14 shows a compositional bias: basic residues; sequence MKNKTHKGTAKRVK. Positions 1 to 30 are disordered; sequence MKNKTHKGTAKRVKVTGSGKLVREQANRRH. Positions 21-30 are enriched in basic and acidic residues; sequence LVREQANRRH.

It belongs to the bacterial ribosomal protein bL35 family.

This chain is Large ribosomal subunit protein bL35, found in Corynebacterium efficiens (strain DSM 44549 / YS-314 / AJ 12310 / JCM 11189 / NBRC 100395).